We begin with the raw amino-acid sequence, 2211 residues long: Coagulation factor V (2211 aa).

A signal peptide spans 1-28 (MFLACPGFWVLVVLGSSWAGWGNLGAEA). 4 Plastocyanin-like domains span residues 30–193 (KLRQ…LLIC), 203–327 (TQKM…IDIK), 348–525 (KRWE…LLIC), and 535–686 (IQRA…FRDA). F5/8 type A domains lie at 30–327 (KLRQ…IDIK) and 348–686 (KRWE…FRDA). The Ca(2+) site is built by D139 and D140. Cysteines 167 and 193 form a disulfide. Residues N225, N239, N297, N382, and N460 are each glycosylated (N-linked (GlcNAc...) asparagine). Cysteines 248 and 329 form a disulfide. C499 and C525 are disulfide-bonded. N-linked (GlcNAc...) asparagine glycans are attached at residues N553 and N587. A disulfide bond links C607 and C688. The residue at position 644 (T644) is a Phosphothreonine. The segment at 696 to 1564 (SYEIIYEPSG…PDNIAAWYLR (869 aa)) is b. A sulfotyrosine mark is found at Y697, Y701, and Y730. Positions 742–1564 (SFRNSSLNQE…PDNIAAWYLR (823 aa)) are cleaved as a propeptide — activation peptide (connecting region). N745, N756, N774, and N780 each carry an N-linked (GlcNAc...) asparagine glycan. The interval 814–844 (LEHAGLDKNSALNPPMAEHSSPYSEDPREDH) is disordered. N902, N952, and N964 each carry an N-linked (GlcNAc...) asparagine glycan. The span at 954–969 (TVNKLPNSPQNDSRTW) shows a compositional bias: polar residues. The tract at residues 954–1039 (TVNKLPNSPQ…PLSPRSFHPL (86 aa)) is disordered. Over residues 995–1009 (PLQDRQDRRNSRLKE) the composition is skewed to basic and acidic residues. N-linked (GlcNAc...) asparagine glycans are attached at residues N1044, N1053, N1062, N1071, N1078, and N1094. Disordered regions lie at residues 1084-1162 (SLPD…IPNY) and 1195-1471 (QPSI…FGQT). 2 stretches are compositionally biased toward polar residues: residues 1091 to 1103 (TSPN…TSSP) and 1127 to 1160 (THST…SQIP). 30 consecutive repeat copies span residues 1124-1137 (SDPT…SNRS), 1138-1151 (PDPT…SNRS), 1188-1196 (ATSLDLSQP), 1197-1205 (SISPDLGQM), 1206-1214 (ALSPDPGQE), 1215-1223 (SLSPDLGQT), 1224-1232 (SLSPDLSQE), 1233-1241 (SLSPDLGQT), 1242-1250 (ALSPDPSQE), 1251-1259 (SLSPDLGQT), 1260-1268 (ALSPDPSQE), 1269-1277 (SLSPDLGQT), 1278-1286 (ALSPDPGQE), 1287-1295 (SLSPDLGQT), 1296-1304 (SLSPDLSQE), 1305-1313 (SLSPDLGQT), 1314-1322 (ALSPDPSQE), 1323-1331 (SLSPDLGQT), 1332-1340 (ALSPDPSQE), 1341-1349 (SLSPDLGQT), 1350-1358 (SLSPDLGQE), 1359-1367 (SLSPDLGQT), 1368-1376 (ALSPDPSQE), 1377-1385 (SLSPDLGQT), 1386-1394 (SLSPDLGQE), 1395-1403 (SLSPDLGQT), 1404-1412 (ALSPDLSQE), 1413-1421 (SLSPDLGQT), 1422-1430 (PLSPDLSLE), and 1431-1439 (SLSPDLSQL). The interval 1124-1151 (SDPTHSTTAPSNRSPDPTHSTTAPSNRS) is 2 X 14 AA tandem repeats. The 30 X 9 AA approximate tandem repeats of [AS]-L-S-P-D-[LP]-[GS]-Q-[TE] stretch occupies residues 1188-1453 (ATSLDLSQPS…TSPPLDLNQT (266 aa)). Polar residues-rich tracts occupy residues 1214-1234 (ESLS…QESL), 1241-1252 (TALSPDPSQESL), 1259-1270 (TALSPDPSQESL), 1286-1306 (ESLS…QESL), 1313-1324 (TALSPDPSQESL), 1331-1352 (TALS…TSLS), 1367-1388 (TALS…TSLS), and 1403-1414 (TALSPDLSQESL). The span at 1422 to 1441 (PLSPDLSLESLSPDLSQLDL) shows a compositional bias: low complexity. The 2-29; truncated repeat unit spans residues 1440–1444 (DLKQT). The span at 1442-1463 (KQTSPPLDLNQTSHTSESSQSL) shows a compositional bias: polar residues. A 2-30 repeat occupies 1445 to 1453 (SPPLDLNQT). 2 N-linked (GlcNAc...) asparagine glycosylation sites follow: N1451 and N1490. Y1513, Y1529, Y1537, and Y1541 each carry sulfotyrosine. Residues N1550 and N1690 are each glycosylated (N-linked (GlcNAc...) asparagine). 2 consecutive Plastocyanin-like domains span residues 1569-1738 (NRKY…LLIC) and 1748-1890 (NMPV…FLIV). Residues 1569-1890 (NRKYYYIAAE…AGMQTPFLIV (322 aa)) form the F5/8 type A 3 domain. The cysteines at positions 1712 and 1738 are disulfide-linked. Residues H1830 and H1832 each contribute to the Cu cation site. The N-linked (GlcNAc...) asparagine glycan is linked to N1839. A Cu cation-binding site is contributed by D1872. Disulfide bonds link C1894-C2048 and C2053-C2208. F5/8 type C domains lie at 1894–2048 (CKMP…LQGC) and 2053–2208 (CSTP…LFGC). N1997 and N2196 each carry an N-linked (GlcNAc...) asparagine glycan.

This sequence belongs to the multicopper oxidase family. Factor Va, the activated form of factor V, is composed of a heavy chain and a light chain, non-covalently bound. The interaction between the two chains is calcium-dependent. Forms heterodimer with SERPINA5. Post-translationally, thrombin activates factor V proteolytically to the active cofactor, factor Va (formation of a heavy chain at the N-terminus and a light chain at the C-terminus). Sulfation is required for efficient thrombin cleavage and activation and for full procoagulant activity. In terms of processing, activated protein C inactivates factor V and factor Va by proteolytic degradation.

The protein resides in the secreted. Its activity is regulated as follows. Inhibited by SERPINA5. Functionally, central regulator of hemostasis. It serves as a critical cofactor for the prothrombinase activity of factor Xa that results in the activation of prothrombin to thrombin. This chain is Coagulation factor V (F5), found in Bos taurus (Bovine).